Consider the following 511-residue polypeptide: GMP synthase [glutamine-hydrolyzing] (511 aa).

One can recognise a Glutamine amidotransferase type-1 domain in the interval 5 to 195 (DILVLDFGSQ…AKYACNCESI (191 aa)). The active-site Nucleophile is the cysteine 82. Catalysis depends on residues histidine 169 and glutamate 171. A GMPS ATP-PPase domain is found at 196–386 (WNMGSFAKTQ…LGLSKEVVYR (191 aa)). Residue 223-229 (SGGVDSS) coordinates ATP.

In terms of assembly, homodimer.

It carries out the reaction XMP + L-glutamine + ATP + H2O = GMP + L-glutamate + AMP + diphosphate + 2 H(+). It participates in purine metabolism; GMP biosynthesis; GMP from XMP (L-Gln route): step 1/1. Catalyzes the synthesis of GMP from XMP. This Campylobacter jejuni subsp. jejuni serotype O:2 (strain ATCC 700819 / NCTC 11168) protein is GMP synthase [glutamine-hydrolyzing] (guaA).